Reading from the N-terminus, the 122-residue chain is Large ribosomal subunit protein uL14 (122 aa).

Belongs to the universal ribosomal protein uL14 family. Part of the 50S ribosomal subunit. Forms a cluster with proteins L3 and L19. In the 70S ribosome, L14 and L19 interact and together make contacts with the 16S rRNA in bridges B5 and B8.

Its function is as follows. Binds to 23S rRNA. Forms part of two intersubunit bridges in the 70S ribosome. The sequence is that of Large ribosomal subunit protein uL14 from Bdellovibrio bacteriovorus (strain ATCC 15356 / DSM 50701 / NCIMB 9529 / HD100).